The sequence spans 347 residues: Selenide, water dikinase 2 (347 aa).

Sec18 is an active-site residue. Sec18 is a non-standard amino acid (selenocysteine). Residues Lys21 and 48-50 (TSD) contribute to the ATP site. Asp51 serves as a coordination point for Mg(2+). Residues Asp68, Asp91, and 138–140 (GHT) contribute to the ATP site. Asp91 serves as a coordination point for Mg(2+). Asp226 lines the Mg(2+) pocket.

It belongs to the selenophosphate synthase 1 family. Class I subfamily. Homodimer. It depends on Mg(2+) as a cofactor.

The enzyme catalyses hydrogenselenide + ATP + H2O = selenophosphate + AMP + phosphate + 2 H(+). Synthesizes selenophosphate from selenide and ATP. This is Selenide, water dikinase 2 from Peptoclostridium acidaminophilum (Eubacterium acidaminophilum).